Here is a 968-residue protein sequence, read N- to C-terminus: RNA polymerase-associated protein RapA (968 aa).

A Helicase ATP-binding domain is found at 164-334; that stretch reads DVGRRHAPRV…FARLRLLDPN (171 aa). 177 to 184 lines the ATP pocket; it reads DEVGLGKT. The short motif at 280–283 is the DEAH box element; the sequence is DEAH. The Helicase C-terminal domain maps to 490–644; sequence RVEWLMGYLT…TCPTGRTIYD (155 aa).

The protein belongs to the SNF2/RAD54 helicase family. RapA subfamily. As to quaternary structure, interacts with the RNAP. Has a higher affinity for the core RNAP than for the holoenzyme. Its ATPase activity is stimulated by binding to RNAP.

In terms of biological role, transcription regulator that activates transcription by stimulating RNA polymerase (RNAP) recycling in case of stress conditions such as supercoiled DNA or high salt concentrations. Probably acts by releasing the RNAP, when it is trapped or immobilized on tightly supercoiled DNA. Does not activate transcription on linear DNA. Probably not involved in DNA repair. This Enterobacter sp. (strain 638) protein is RNA polymerase-associated protein RapA.